Consider the following 620-residue polypeptide: 1-deoxy-D-xylulose-5-phosphate synthase (620 aa).

Thiamine diphosphate is bound by residues H80 and 121–123 (GHS). D152 is a binding site for Mg(2+). Residues 153-154 (GA), N181, Y288, and E370 each bind thiamine diphosphate. Mg(2+) is bound at residue N181.

Belongs to the transketolase family. DXPS subfamily. In terms of assembly, homodimer. The cofactor is Mg(2+). Thiamine diphosphate serves as cofactor.

The enzyme catalyses D-glyceraldehyde 3-phosphate + pyruvate + H(+) = 1-deoxy-D-xylulose 5-phosphate + CO2. It participates in metabolic intermediate biosynthesis; 1-deoxy-D-xylulose 5-phosphate biosynthesis; 1-deoxy-D-xylulose 5-phosphate from D-glyceraldehyde 3-phosphate and pyruvate: step 1/1. Catalyzes the acyloin condensation reaction between C atoms 2 and 3 of pyruvate and glyceraldehyde 3-phosphate to yield 1-deoxy-D-xylulose-5-phosphate (DXP). The sequence is that of 1-deoxy-D-xylulose-5-phosphate synthase from Shigella dysenteriae serotype 1 (strain Sd197).